Reading from the N-terminus, the 867-residue chain is MERFVLCIHWERRAESGAEQHRVPQGLAYAQDIYTQLKEYSTKYTSTFPACSLTGNPGTRKWFFALQSLYGSFQFCSSDWDDLCPAVTTEDNEEPVQTALDECLEALQFPDGEDDNSRDSISQTNLFEEAAELLHQLSDKLPAPGRALVDVLLFTPEAPKLKDCLSAIGAIKHLKEWHSAKITIVSKDCKGWQKIAKFLSANVVESACPKELIDSHELWRGNIEISERKFTSEVEFPEFCLRSVSDDKFPYFEHNGDDKNKAVLLPEVFHYYGTSLEYVQMVALSEIPSYFVSDSVFELSITRNALQGKSKLMLDQLCSLTDKVGAIFMLSCNVCSLPNPPALQRSSKKWREYMSRKPKDIKVPGVELKGEYCSYYFLIQGKGSGFCKATLLHSASQISGAASLVLLHQRLNNYQPGNMAEGTSEILDSVPHFRGEQIAVRERILARAQALAVNEYLKRHEALPHPSVSHVNNLRTLLAVTRERVIGDCESRLDGVSYKNLQNITVSTPTVSESEAMISNPADWPERNVLQNLENFEKVKQRLRASILSSSAEQLLGRKDGLKEGMTLLDAKELLKYFTPQGIAVGELQPLQVQRGDNAFLLTPKLTPKKLKGLPFEKAAECHYHGLEYCLDNRKALDRDVAFSELQSRLIRYETQTTCTRECCPVPFALSPLPSPAVLSEPGSVPDGESIQTELRGEPLLLKRRSRDLDGLYASKRLAKSGSSDSLVSLASEGSGHQPPTRATRLRPERAASSTSAVQPPSARVQMAPSVPAQSKQSTHPDLEQKESRSQKHNRMLKEVVSKTLQKYGIGVEHPCYAACNQRLFDISKFFLKDLKTSRGLLDEMKKAASNNAKQVIQWELDKLKKK.

Disordered stretches follow at residues 679-699 (LSEP…RGEP) and 724-793 (SDSL…SQKH). Positions 724–735 (SDSLVSLASEGS) are enriched in low complexity. The span at 779–793 (THPDLEQKESRSQKH) shows a compositional bias: basic and acidic residues.

It belongs to the MTBP family.

May play a role in mdm2-dependent p53/TP53 homeostasis in unstressed cells. Inhibits autoubiquitination of mdm2, thereby enhancing mdm2 stability. This promotes mdm2-mediated ubiquitination of p53/TP53 and its subsequent degradation. The protein is Mdm2-binding protein (mtbp) of Xenopus tropicalis (Western clawed frog).